The primary structure comprises 338 residues: Holliday junction branch migration complex subunit RuvB (338 aa).

The tract at residues 1-22 (MIEADRLIHAEPQGPEERDEQI) is disordered. Residues 4–187 (ADRLIHAEPQ…FGIPLRLEFY (184 aa)) form a large ATPase domain (RuvB-L) region. ATP contacts are provided by residues Arg27, Gly68, Lys71, Thr72, Thr73, 134–136 (EDY), Arg177, Tyr187, and Arg224. Thr72 contributes to the Mg(2+) binding site. Residues 188–258 (NTKDLSSIVS…VADLALDMLD (71 aa)) form a small ATPAse domain (RuvB-S) region. A head domain (RuvB-H) region spans residues 261–338 (SEGFDYMDRK…RHFDIIQPEK (78 aa)). DNA is bound by residues Arg297, Arg316, and Arg321.

Belongs to the RuvB family. Homohexamer. Forms an RuvA(8)-RuvB(12)-Holliday junction (HJ) complex. HJ DNA is sandwiched between 2 RuvA tetramers; dsDNA enters through RuvA and exits via RuvB. An RuvB hexamer assembles on each DNA strand where it exits the tetramer. Each RuvB hexamer is contacted by two RuvA subunits (via domain III) on 2 adjacent RuvB subunits; this complex drives branch migration. In the full resolvosome a probable DNA-RuvA(4)-RuvB(12)-RuvC(2) complex forms which resolves the HJ.

Its subcellular location is the cytoplasm. The enzyme catalyses ATP + H2O = ADP + phosphate + H(+). Its function is as follows. The RuvA-RuvB-RuvC complex processes Holliday junction (HJ) DNA during genetic recombination and DNA repair, while the RuvA-RuvB complex plays an important role in the rescue of blocked DNA replication forks via replication fork reversal (RFR). RuvA specifically binds to HJ cruciform DNA, conferring on it an open structure. The RuvB hexamer acts as an ATP-dependent pump, pulling dsDNA into and through the RuvAB complex. RuvB forms 2 homohexamers on either side of HJ DNA bound by 1 or 2 RuvA tetramers; 4 subunits per hexamer contact DNA at a time. Coordinated motions by a converter formed by DNA-disengaged RuvB subunits stimulates ATP hydrolysis and nucleotide exchange. Immobilization of the converter enables RuvB to convert the ATP-contained energy into a lever motion, pulling 2 nucleotides of DNA out of the RuvA tetramer per ATP hydrolyzed, thus driving DNA branch migration. The RuvB motors rotate together with the DNA substrate, which together with the progressing nucleotide cycle form the mechanistic basis for DNA recombination by continuous HJ branch migration. Branch migration allows RuvC to scan DNA until it finds its consensus sequence, where it cleaves and resolves cruciform DNA. The chain is Holliday junction branch migration complex subunit RuvB from Shewanella sediminis (strain HAW-EB3).